We begin with the raw amino-acid sequence, 506 residues long: DNA nucleotidylexotransferase (506 aa).

The short motif at 11–17 (SQRKRQK) is the Nuclear localization signal element. Residues 27–124 (GYEIKFNKLV…RPVDLEKKYH (98 aa)) enclose the BRCT domain. Residues 258 to 262 (VGVKT) are involved in DNA binding. A 2'-deoxyribonucleoside 5'-triphosphate-binding positions include 333–338 (GFRRGK) and 342–345 (HDID). Positions 343, 345, and 430 each coordinate Mg(2+). Position 445–446 (445–446 (GW)) interacts with a 2'-deoxyribonucleoside 5'-triphosphate.

This sequence belongs to the DNA polymerase type-X family. Mg(2+) is required as a cofactor.

It localises to the nucleus. It catalyses the reaction DNA(n) + a 2'-deoxyribonucleoside 5'-triphosphate = DNA(n+1) + diphosphate. In terms of biological role, template-independent DNA polymerase which catalyzes the random addition of deoxynucleoside 5'-triphosphate to the 3'-end of a DNA initiator. One of the in vivo functions of this enzyme is the addition of nucleotides at the junction (N region) of rearranged Ig heavy chain and T-cell receptor gene segments during the maturation of B- and T-cells. In Gallus gallus (Chicken), this protein is DNA nucleotidylexotransferase (DNTT).